The primary structure comprises 116 residues: NADH-quinone oxidoreductase subunit A (116 aa).

Transmembrane regions (helical) follow at residues F3–L23, F61–I81, and Q88–W108.

The protein belongs to the complex I subunit 3 family. As to quaternary structure, NDH-1 is composed of 14 different subunits. Subunits NuoA, H, J, K, L, M, N constitute the membrane sector of the complex.

It is found in the cell inner membrane. The catalysed reaction is a quinone + NADH + 5 H(+)(in) = a quinol + NAD(+) + 4 H(+)(out). Functionally, NDH-1 shuttles electrons from NADH, via FMN and iron-sulfur (Fe-S) centers, to quinones in the respiratory chain. The immediate electron acceptor for the enzyme in this species is believed to be a menaquinone. Couples the redox reaction to proton translocation (for every two electrons transferred, four hydrogen ions are translocated across the cytoplasmic membrane), and thus conserves the redox energy in a proton gradient. This Bacteroides fragilis (strain ATCC 25285 / DSM 2151 / CCUG 4856 / JCM 11019 / LMG 10263 / NCTC 9343 / Onslow / VPI 2553 / EN-2) protein is NADH-quinone oxidoreductase subunit A.